The sequence spans 149 residues: Large ribosomal subunit protein bL9 (149 aa).

This sequence belongs to the bacterial ribosomal protein bL9 family.

Binds to the 23S rRNA. In Leptospira borgpetersenii serovar Hardjo-bovis (strain JB197), this protein is Large ribosomal subunit protein bL9.